A 214-amino-acid polypeptide reads, in one-letter code: Single-pass membrane and coiled-coil domain-containing protein 1 (214 aa).

Residues 6-42 (TTLISLKEAMKRVDHKLQALETQFKELDFTKDNLMQK) adopt a coiled-coil conformation. A helical transmembrane segment spans residues 65–81 (ALQLTSMELNILYSYVI).

Its subcellular location is the membrane. This chain is Single-pass membrane and coiled-coil domain-containing protein 1 (SMCO1), found in Homo sapiens (Human).